The sequence spans 142 residues: Transcriptional regulator MraZ (142 aa).

2 consecutive SpoVT-AbrB domains span residues 5-51 and 77-120; these read ASAL…PRPE and AMDV…DSQT.

It belongs to the MraZ family. As to quaternary structure, forms oligomers.

The protein localises to the cytoplasm. Its subcellular location is the nucleoid. The protein is Transcriptional regulator MraZ of Burkholderia cenocepacia (strain HI2424).